Consider the following 118-residue polypeptide: NADH-quinone oxidoreductase subunit A (118 aa).

A run of 3 helical transmembrane segments spans residues 6–26 (LPVL…LLMG), 64–84 (AILF…AVVF), and 87–107 (IGMT…VGFI).

It belongs to the complex I subunit 3 family. NDH-1 is composed of 14 different subunits. Subunits NuoA, H, J, K, L, M, N constitute the membrane sector of the complex.

Its subcellular location is the cell inner membrane. The enzyme catalyses a quinone + NADH + 5 H(+)(in) = a quinol + NAD(+) + 4 H(+)(out). Functionally, NDH-1 shuttles electrons from NADH, via FMN and iron-sulfur (Fe-S) centers, to quinones in the respiratory chain. The immediate electron acceptor for the enzyme in this species is believed to be ubiquinone. Couples the redox reaction to proton translocation (for every two electrons transferred, four hydrogen ions are translocated across the cytoplasmic membrane), and thus conserves the redox energy in a proton gradient. In Acidithiobacillus ferrooxidans (strain ATCC 53993 / BNL-5-31) (Leptospirillum ferrooxidans (ATCC 53993)), this protein is NADH-quinone oxidoreductase subunit A.